Consider the following 882-residue polypeptide: Alanine--tRNA ligase (882 aa).

Zn(2+)-binding residues include H570, H574, C672, and H676.

Belongs to the class-II aminoacyl-tRNA synthetase family. It depends on Zn(2+) as a cofactor.

It is found in the cytoplasm. The enzyme catalyses tRNA(Ala) + L-alanine + ATP = L-alanyl-tRNA(Ala) + AMP + diphosphate. Its function is as follows. Catalyzes the attachment of alanine to tRNA(Ala) in a two-step reaction: alanine is first activated by ATP to form Ala-AMP and then transferred to the acceptor end of tRNA(Ala). Also edits incorrectly charged Ser-tRNA(Ala) and Gly-tRNA(Ala) via its editing domain. This Xanthomonas euvesicatoria pv. vesicatoria (strain 85-10) (Xanthomonas campestris pv. vesicatoria) protein is Alanine--tRNA ligase.